Here is a 349-residue protein sequence, read N- to C-terminus: tRNA pseudouridine synthase D (349 aa).

A substrate-binding site is contributed by Phe-27. Asp-80 (nucleophile) is an active-site residue. Residue Asn-129 participates in substrate binding. A TRUD domain is found at 155–303 (GVPNYFGAQR…VEAARRAMLL (149 aa)). Substrate is bound at residue Phe-329.

This sequence belongs to the pseudouridine synthase TruD family.

It carries out the reaction uridine(13) in tRNA = pseudouridine(13) in tRNA. Functionally, responsible for synthesis of pseudouridine from uracil-13 in transfer RNAs. This is tRNA pseudouridine synthase D from Escherichia coli (strain 55989 / EAEC).